Here is a 159-residue protein sequence, read N- to C-terminus: uncharacterized protein (159 aa).

This is an uncharacterized protein from Bacillus subtilis (strain 168).